The chain runs to 360 residues: 45 kDa calcium-binding protein (360 aa).

The signal sequence occupies residues 1–29; it reads MVSKQAFLFSLGSLYLSLLFVFLLMDVYA. An N-linked (GlcNAc...) asparagine glycan is attached at N33. EF-hand domains follow at residues 96-131, 135-170, 231-266, 276-311, and 312-347; these read RNRR…KTEE, EAVN…SKGF, MLKF…TVEN, WVRD…MNEY, and NALN…FTGS. Residues D109, N111, D113, Q115, E120, D148, D150, D152, H154, E159, D244, D246, D248, K250, E255, D289, N291, D293, E300, D325, N327, D329, H331, and E336 each contribute to the Ca(2+) site.

This sequence belongs to the CREC family.

Its subcellular location is the golgi apparatus lumen. Its function is as follows. May regulate calcium-dependent activities in the endoplasmic reticulum lumen or post-ER compartment. In Xenopus tropicalis (Western clawed frog), this protein is 45 kDa calcium-binding protein (sdf4).